Reading from the N-terminus, the 233-residue chain is MADS-box protein CMB1 (233 aa).

Residues 3–58 form the MADS-box domain; that stretch reads RGRVELKRIENKINRQVTFAKRRNGLLKKAYELSVLCDAEVALIVFSNRGKLYEFC. The K-box domain occupies 87-177; that stretch reads TESSYQEYLK…KTKLEESCAS (91 aa).

Its subcellular location is the nucleus. The protein is MADS-box protein CMB1 (CMB1) of Dianthus caryophyllus (Carnation).